Here is a 114-residue protein sequence, read N- to C-terminus: MVDQNPKRSNEPPVWLMFSAGGMVSGLAFPVLILILGILLPFGIISPDNIIAFSHHWFGKLVILALTIFPMWAGLHRLHHGMHDIKVHVPNGGLIFYGLAAVYSFIVLFAVIAI.

3 helical membrane-spanning segments follow: residues 25 to 45 (SGLAFPVLILILGILLPFGII), 50 to 70 (IIAFSHHWFGKLVILALTIFP), and 94 to 114 (LIFYGLAAVYSFIVLFAVIAI).

This sequence belongs to the FrdD family. In terms of assembly, part of an enzyme complex containing four subunits: a flavoprotein (FrdA), an iron-sulfur protein (FrdB), and two hydrophobic anchor proteins (FrdC and FrdD).

The protein resides in the cell inner membrane. Its function is as follows. Anchors the catalytic components of the fumarate reductase complex to the cell membrane, binds quinones. The polypeptide is Fumarate reductase subunit D (Mannheimia succiniciproducens (strain KCTC 0769BP / MBEL55E)).